Consider the following 277-residue polypeptide: Inorganic pyrophosphatase (277 aa).

Arg-80 provides a ligand contact to diphosphate. Residues Asp-117, Asp-122, and Asp-154 each contribute to the Mg(2+) site.

It belongs to the PPase family. It depends on Mg(2+) as a cofactor.

The protein localises to the cytoplasm. It carries out the reaction diphosphate + H2O = 2 phosphate + H(+). Its function is as follows. Involved in osmoadaptation. The chain is Inorganic pyrophosphatase (IPP1) from Encephalitozoon cuniculi (strain GB-M1) (Microsporidian parasite).